The primary structure comprises 288 residues: Bifunctional protein FolD (288 aa).

NADP(+)-binding positions include 166–168 (GAS) and I232.

Belongs to the tetrahydrofolate dehydrogenase/cyclohydrolase family. Homodimer.

The enzyme catalyses (6R)-5,10-methylene-5,6,7,8-tetrahydrofolate + NADP(+) = (6R)-5,10-methenyltetrahydrofolate + NADPH. It carries out the reaction (6R)-5,10-methenyltetrahydrofolate + H2O = (6R)-10-formyltetrahydrofolate + H(+). It participates in one-carbon metabolism; tetrahydrofolate interconversion. In terms of biological role, catalyzes the oxidation of 5,10-methylenetetrahydrofolate to 5,10-methenyltetrahydrofolate and then the hydrolysis of 5,10-methenyltetrahydrofolate to 10-formyltetrahydrofolate. The polypeptide is Bifunctional protein FolD (Escherichia coli (strain SMS-3-5 / SECEC)).